The primary structure comprises 83 residues: uncharacterized protein (83 aa).

A run of 2 helical transmembrane segments spans residues 11–31 (FYCIVTIPSAFVVLTVISFLL) and 48–68 (WHNLLFLIPFGLFFYPVHIWM).

The protein localises to the cell membrane. This is an uncharacterized protein from Bacillus subtilis (strain 168).